Reading from the N-terminus, the 188-residue chain is GMP synthase [glutamine-hydrolyzing] subunit A (188 aa).

The Glutamine amidotransferase type-1 domain occupies Lys-2 to Lys-188. Cys-79 acts as the Nucleophile in catalysis. Catalysis depends on residues His-166 and Glu-168.

Heterodimer composed of a glutamine amidotransferase subunit (A) and a GMP-binding subunit (B).

It catalyses the reaction XMP + L-glutamine + ATP + H2O = GMP + L-glutamate + AMP + diphosphate + 2 H(+). Its pathway is purine metabolism; GMP biosynthesis; GMP from XMP (L-Gln route): step 1/1. Catalyzes the synthesis of GMP from XMP. This chain is GMP synthase [glutamine-hydrolyzing] subunit A, found in Saccharolobus solfataricus (strain ATCC 35092 / DSM 1617 / JCM 11322 / P2) (Sulfolobus solfataricus).